The chain runs to 272 residues: Energy-coupling factor transporter ATP-binding protein EcfA1 (272 aa).

The ABC transporter domain occupies 5–239; the sequence is IKIDNLKYSY…RKALHENGLE (235 aa). 37–44 contributes to the ATP binding site; that stretch reads GHNGSGKS. E163 (proton acceptor) is an active-site residue.

This sequence belongs to the ABC transporter superfamily. Energy-coupling factor EcfA family. As to quaternary structure, forms a stable energy-coupling factor (ECF) transporter complex probably composed of 2 membrane-embedded substrate-binding proteins (S component), 2 ATP-binding proteins (A component) and 2 transmembrane proteins (T component). This complex interacts with a number of substrate-specific components, including FolT, PanT and RibU for 5-formyltetrahydrofolate, pantothenate and riboflavin respectively.

The protein resides in the cell membrane. In terms of biological role, ATP-binding (A) component of a common energy-coupling factor (ECF) ABC-transporter complex. Unlike classic ABC transporters this ECF transporter provides the energy necessary to transport a number of different substrates including 5-formyltetrahydrofolate, pantothenate and riboflavin. Expression of the complex plus FolT in E.coli allows 5-formyltetrahydrofolate uptake; 5-formyltetrahydrofolate is not taken up in the absence of FolT or the EcfA1A2T complex. The protein is Energy-coupling factor transporter ATP-binding protein EcfA1 of Leuconostoc mesenteroides subsp. mesenteroides (strain ATCC 8293 / DSM 20343 / BCRC 11652 / CCM 1803 / JCM 6124 / NCDO 523 / NBRC 100496 / NCIMB 8023 / NCTC 12954 / NRRL B-1118 / 37Y).